The primary structure comprises 142 residues: Large ribosomal subunit protein uL11 (142 aa).

The protein belongs to the universal ribosomal protein uL11 family. As to quaternary structure, part of the ribosomal stalk of the 50S ribosomal subunit. Interacts with L10 and the large rRNA to form the base of the stalk. L10 forms an elongated spine to which L12 dimers bind in a sequential fashion forming a multimeric L10(L12)X complex. Post-translationally, one or more lysine residues are methylated.

Functionally, forms part of the ribosomal stalk which helps the ribosome interact with GTP-bound translation factors. This Shigella boydii serotype 4 (strain Sb227) protein is Large ribosomal subunit protein uL11.